The primary structure comprises 410 residues: Lipid droplet-regulating VLDL assembly factor AUP1 (410 aa).

The residue at position 1 (Met-1) is an N-acetylmethionine. At Met-1–Ser-20 the chain is on the cytoplasmic side. The stretch at Asp-21–Leu-41 is an intramembrane region. Residues Arg-42–Glu-410 lie on the Cytoplasmic side of the membrane. A disordered region spans residues Leu-259 to Ser-293. Ser-292 bears the Phosphoserine mark. One can recognise a CUE domain in the interval Gln-296–Val-338. Residues Gly-348–Thr-367 are disordered. Residue Ser-363 is modified to Phosphoserine. Thr-367 carries the post-translational modification Phosphothreonine.

The protein belongs to the AUP1 family. In terms of assembly, identified in a complex that contains SEL1L, OS9, FAF2/UBXD8, UBE2J1/UBC6E and AUP1. Interacts with the cytoplasmic tail of ITGA2B, ITGA1, ITGA2, ITGA5, ITGAV and ITGAM. Interacts (via C-terminus) with UBE2G2; the interaction recruits UBE2G2 to lipid droplets. Interacts with ubiquitin ligases AMFR/gp78 and RNF139/TRC8; this promotes interaction of UBE2G2 with AMFR and RNF139. Interacts with apolipoprotein APOB. Monoubiquitinated and diubiquitinated.

The protein resides in the endoplasmic reticulum membrane. It localises to the lipid droplet. Plays a role in the translocation of terminally misfolded proteins from the endoplasmic reticulum lumen to the cytoplasm and their degradation by the proteasome. Plays a role in lipid droplet formation. Induces lipid droplet clustering. Recruits ubiquitin-conjugating enzyme UBE2G2 to lipid droplets which facilitates its interaction with ubiquitin ligases AMFR/gp78 and RNF139/TRC8, leading to sterol-induced ubiquitination of HMGCR and its subsequent proteasomal degradation. Also required for the degradation of INSIG1, SREBF1 and SREBF2. Plays a role in regulating assembly and secretion of very low density lipoprotein particles and stability of apolipoprotein APOB. This chain is Lipid droplet-regulating VLDL assembly factor AUP1, found in Rattus norvegicus (Rat).